The chain runs to 133 residues: Holo-[acyl-carrier-protein] synthase (133 aa).

Residues Asp-8 and Glu-56 each contribute to the Mg(2+) site.

The protein belongs to the P-Pant transferase superfamily. AcpS family. Mg(2+) is required as a cofactor.

It is found in the cytoplasm. The enzyme catalyses apo-[ACP] + CoA = holo-[ACP] + adenosine 3',5'-bisphosphate + H(+). Its function is as follows. Transfers the 4'-phosphopantetheine moiety from coenzyme A to a Ser of acyl-carrier-protein. The chain is Holo-[acyl-carrier-protein] synthase from Clostridium perfringens (strain SM101 / Type A).